The sequence spans 376 residues: N-acetyldiaminopimelate deacetylase (376 aa).

Aspartate 69 is an active-site residue. Catalysis depends on glutamate 128, which acts as the Proton acceptor.

This sequence belongs to the peptidase M20A family. N-acetyldiaminopimelate deacetylase subfamily.

It catalyses the reaction N-acetyl-(2S,6S)-2,6-diaminopimelate + H2O = (2S,6S)-2,6-diaminopimelate + acetate. It participates in amino-acid biosynthesis; L-lysine biosynthesis via DAP pathway; LL-2,6-diaminopimelate from (S)-tetrahydrodipicolinate (acetylase route): step 3/3. Catalyzes the conversion of N-acetyl-diaminopimelate to diaminopimelate and acetate. The chain is N-acetyldiaminopimelate deacetylase from Bacillus cereus (strain B4264).